Consider the following 544-residue polypeptide: CTP synthase (544 aa).

The segment at 1-266 (MSTKFIFVTG…DYFVCRRFHL (266 aa)) is amidoligase domain. S14 lines the CTP pocket. S14 is a binding site for UTP. ATP contacts are provided by residues 15–20 (SLGKGI) and D72. D72 and E140 together coordinate Mg(2+). CTP contacts are provided by residues 147-149 (DIE), 187-192 (KTKPTQ), and K223. Residues 187–192 (KTKPTQ) and K223 contribute to the UTP site. The 252-residue stretch at 291-542 (TIGMVGKYIE…VAAAHIHQKA (252 aa)) folds into the Glutamine amidotransferase type-1 domain. Position 352 (G352) interacts with L-glutamine. The active-site Nucleophile; for glutamine hydrolysis is the C379. L-glutamine is bound by residues 380–383 (LGMQ), E403, and R470. Catalysis depends on residues H515 and E517.

It belongs to the CTP synthase family. In terms of assembly, homotetramer.

It catalyses the reaction UTP + L-glutamine + ATP + H2O = CTP + L-glutamate + ADP + phosphate + 2 H(+). The catalysed reaction is L-glutamine + H2O = L-glutamate + NH4(+). The enzyme catalyses UTP + NH4(+) + ATP = CTP + ADP + phosphate + 2 H(+). It functions in the pathway pyrimidine metabolism; CTP biosynthesis via de novo pathway; CTP from UDP: step 2/2. Allosterically activated by GTP, when glutamine is the substrate; GTP has no effect on the reaction when ammonia is the substrate. The allosteric effector GTP functions by stabilizing the protein conformation that binds the tetrahedral intermediate(s) formed during glutamine hydrolysis. Inhibited by the product CTP, via allosteric rather than competitive inhibition. Functionally, catalyzes the ATP-dependent amination of UTP to CTP with either L-glutamine or ammonia as the source of nitrogen. Regulates intracellular CTP levels through interactions with the four ribonucleotide triphosphates. In Pseudoalteromonas translucida (strain TAC 125), this protein is CTP synthase.